Reading from the N-terminus, the 1648-residue chain is Putative 1-phosphatidylinositol-3-phosphate 5-kinase FAB1C (1648 aa).

Over residues 97 to 106 (YDKVHPRDSP) the composition is skewed to basic and acidic residues. Disordered regions lie at residues 97–116 (YDKV…ATES), 241–276 (QEDH…NDDA), 721–746 (SEIP…ENQL), and 1083–1139 (KTGD…GTSL). Positions 1084–1130 (TGDDNAPRNPEMHDPPKIDRRMQEGSDERDEQSHTDSEANGDNKDPE) are enriched in basic and acidic residues. One can recognise a PIPK domain in the interval 1316–1639 (NLNNRESEPS…RFRKAMTTYF (324 aa)).

Component of the PI(3,5)P2 regulatory complex at least composed of ATG18, SAC/FIG4, FAB1 and VAC14. Mg(2+) is required as a cofactor. The cofactor is Mn(2+).

The enzyme catalyses a 1,2-diacyl-sn-glycero-3-phospho-(1D-myo-inositol-3-phosphate) + ATP = a 1,2-diacyl-sn-glycero-3-phospho-(1D-myo-inositol-3,5-bisphosphate) + ADP + H(+). In terms of biological role, the PI(3,5)P2 regulatory complex regulates both the synthesis and turnover of phosphatidylinositol 3,5-bisphosphate (PtdIns(3,5)P2). Catalyzes the phosphorylation of phosphatidylinositol 3-phosphate on the fifth hydroxyl of the myo-inositol ring, to form phosphatidylinositol 3,5-bisphosphate. The protein is Putative 1-phosphatidylinositol-3-phosphate 5-kinase FAB1C (FAB1C) of Arabidopsis thaliana (Mouse-ear cress).